Consider the following 61-residue polypeptide: uncharacterized protein (61 aa).

A disordered region spans residues 39–61; the sequence is PRPFTPGLADPRRLGPRRVQAAQ.

This is an uncharacterized protein from Pan troglodytes (Chimpanzee).